The sequence spans 146 residues: Large ribosomal subunit protein uL15 (146 aa).

The tract at residues 1–54 (MKLHELKPAAGSKKAPKRIGRGTGSGLGRNAGKGEKGQNARSGGGVRPGFEGGQ) is disordered. Gly residues-rich tracts occupy residues 21–31 (RGTGSGLGRNA) and 42–52 (SGGGVRPGFEG).

This sequence belongs to the universal ribosomal protein uL15 family. As to quaternary structure, part of the 50S ribosomal subunit.

Binds to the 23S rRNA. The sequence is that of Large ribosomal subunit protein uL15 from Clostridium beijerinckii (strain ATCC 51743 / NCIMB 8052) (Clostridium acetobutylicum).